Reading from the N-terminus, the 180-residue chain is MPPPSRSRINKTRTLGIVGTAIAVLVTSYYIYQKVTSAKEDNGARPPEGDSVKENKKARKSKCIIMSKSIQGLPIKWEEYAADEVVLLVPTSHTDGSMKQAIGDAFRKTKNEHKIIYCDSMDGLWSCVRRLGKFQCILNSRDFTSSGGSDAAVVPEDIGRFVKFVVDSDVEDVLIDTLCN.

A helical transmembrane segment spans residues L15 to Y32.

The protein belongs to the peroxin-22 family.

The protein localises to the peroxisome membrane. Functionally, involved in peroxisome biogenesis. This Saccharomyces cerevisiae (strain ATCC 204508 / S288c) (Baker's yeast) protein is Peroxisome assembly protein 22 (PEX22).